The primary structure comprises 1026 residues: Multidrug resistance protein MdtC (1026 aa).

11 consecutive transmembrane segments (helical) span residues isoleucine 15 to alanine 35, glutamate 333 to leucine 353, leucine 360 to cysteine 380, leucine 387 to leucine 407, valine 431 to leucine 451, phenylalanine 463 to proline 483, leucine 528 to proline 548, leucine 853 to serine 873, leucine 897 to valine 917, proline 953 to glycine 973, and isoleucine 984 to valine 1004.

Belongs to the resistance-nodulation-cell division (RND) (TC 2.A.6) family. MdtC subfamily. Part of a tripartite efflux system composed of MdtA, MdtB and MdtC. MdtC forms a heteromultimer with MdtB.

It localises to the cell inner membrane. This Salmonella enteritidis PT4 (strain P125109) protein is Multidrug resistance protein MdtC.